The primary structure comprises 663 residues: Transmembrane 9 superfamily member 2 (663 aa).

Positions 1–28 are cleaved as a signal peptide; it reads MSARLPVLSPPRWPRLLLLSLLLLGAVP. The Lumenal portion of the chain corresponds to 29–300; sequence GPRRSGGFYL…LESMPHTHIQ (272 aa). The chain crosses the membrane as a helical span at residues 301–321; the sequence is WFSIMNSLVIVLFLSGMVAMI. Topologically, residues 322–374 are cytoplasmic; sequence MLRTLHKDIARYNQMDSTEDAQEEFGWKLVHGDIFRPPRKGMLLSVFLGSGTQ. A helical membrane pass occupies residues 375–395; sequence ILIMTFVTLFFACLGFLSPAN. Residues 396 to 398 lie on the Lumenal side of the membrane; the sequence is RGA. The chain crosses the membrane as a helical span at residues 399-419; that stretch reads LMTCAVVLWVLLGTPAGYVAA. Topologically, residues 420 to 437 are cytoplasmic; that stretch reads RFYKSFGGEKWKTNVLLT. Residues 438 to 458 traverse the membrane as a helical segment; the sequence is SFLCPGIVFADFFIMNLILWG. At 459-466 the chain is on the lumenal side; sequence EGSSAAIP. The chain crosses the membrane as a helical span at residues 467–487; it reads FGTLVAILALWFCISVPLTFI. Over 488-522 the chain is Cytoplasmic; it reads GAYFGFKKNAIEHPVRTNQIPRQIPEQSFYTKPLP. Residues 523-543 form a helical membrane-spanning segment; the sequence is GIIMGGILPFGCIFIQLFFIL. At 544 to 554 the chain is on the lumenal side; that stretch reads NSIWSHQMYYM. The helical transmembrane segment at 555–575 threads the bilayer; the sequence is FGFLFLVFIILVITCSEATIL. The Cytoplasmic segment spans residues 576–591; the sequence is LCYFHLCAEDYHWQWR. The chain crosses the membrane as a helical span at residues 592-612; sequence SFLTSGFTAVYFLIYAVHYFF. Residues 613-631 are Lumenal-facing; the sequence is SKLQITGTASTILYFGYTM. A helical membrane pass occupies residues 632–652; it reads IMVLIFFLFTGTIGFFACFWF. The Cytoplasmic portion of the chain corresponds to 653–663; that stretch reads VTKIYSVVKVD.

The protein belongs to the nonaspanin (TM9SF) (TC 9.A.2) family.

It localises to the endosome membrane. Its subcellular location is the golgi outpost. The protein resides in the cytoplasm. The protein localises to the cytoskeleton. It is found in the microtubule organizing center. Functionally, in the intracellular compartments, may function as a channel or small molecule transporter. The protein is Transmembrane 9 superfamily member 2 (TM9SF2) of Pongo abelii (Sumatran orangutan).